The following is a 409-amino-acid chain: Argininosuccinate synthase (409 aa).

Residues 10 to 18 (AYSGGLDTS) and Ala-37 each bind ATP. Residues Tyr-90 and Ser-95 each coordinate L-citrulline. Gly-120 contributes to the ATP binding site. Residues Thr-122, Asn-126, and Asp-127 each coordinate L-aspartate. Asn-126 serves as a coordination point for L-citrulline. 5 residues coordinate L-citrulline: Arg-130, Ser-182, Ser-191, Glu-267, and Tyr-279.

This sequence belongs to the argininosuccinate synthase family. Type 1 subfamily. In terms of assembly, homotetramer.

It localises to the cytoplasm. It catalyses the reaction L-citrulline + L-aspartate + ATP = 2-(N(omega)-L-arginino)succinate + AMP + diphosphate + H(+). It functions in the pathway amino-acid biosynthesis; L-arginine biosynthesis; L-arginine from L-ornithine and carbamoyl phosphate: step 2/3. This is Argininosuccinate synthase from Azoarcus sp. (strain BH72).